The sequence spans 237 residues: uncharacterized protein (237 aa).

The region spanning 3-116 (SALLIDDERF…RLAKTVQRLL (114 aa)) is the Response regulatory domain. Position 54 is a 4-aspartylphosphate (aspartate 54). The HTH LytTR-type domain occupies 135–236 (IPCTGLNRIV…LKELKEMLGF (102 aa)).

This is an uncharacterized protein from Vibrio cholerae serotype O1 (strain ATCC 39315 / El Tor Inaba N16961).